The following is a 434-amino-acid chain: Serine--tRNA ligase (434 aa).

237–239 (TAE) is a binding site for L-serine. 268 to 270 (RAE) provides a ligand contact to ATP. L-serine is bound at residue E291. 358-361 (EISS) serves as a coordination point for ATP. L-serine is bound at residue S393.

It belongs to the class-II aminoacyl-tRNA synthetase family. Type-1 seryl-tRNA synthetase subfamily. Homodimer. The tRNA molecule binds across the dimer.

The protein localises to the cytoplasm. The enzyme catalyses tRNA(Ser) + L-serine + ATP = L-seryl-tRNA(Ser) + AMP + diphosphate + H(+). It catalyses the reaction tRNA(Sec) + L-serine + ATP = L-seryl-tRNA(Sec) + AMP + diphosphate + H(+). The protein operates within aminoacyl-tRNA biosynthesis; selenocysteinyl-tRNA(Sec) biosynthesis; L-seryl-tRNA(Sec) from L-serine and tRNA(Sec): step 1/1. In terms of biological role, catalyzes the attachment of serine to tRNA(Ser). Is also able to aminoacylate tRNA(Sec) with serine, to form the misacylated tRNA L-seryl-tRNA(Sec), which will be further converted into selenocysteinyl-tRNA(Sec). The polypeptide is Serine--tRNA ligase (Rhodopseudomonas palustris (strain BisB5)).